The chain runs to 779 residues: Probable ATP-dependent RNA helicase DHX40 (779 aa).

Residues 1 to 28 form a disordered region; that stretch reads MSRFPAVAGRAPRRQEEGERSRDLQEER. The segment covering 13 to 28 has biased composition (basic and acidic residues); that stretch reads RRQEEGERSRDLQEER. The 169-residue stretch at 63–231 folds into the Helicase ATP-binding domain; sequence IQAVRDNSFL…FGNCPIFDIP (169 aa). 76–83 is an ATP binding site; sequence GNTGSGKT. Residues 173-176 carry the DEAH box motif; that stretch reads DEAH. The Helicase C-terminal domain occupies 263–442; it reads TMDIHLNEMA…SVVLTLKCLA (180 aa). Positions 737–779 are disordered; the sequence is SKDVLKKMQRRNDDKSISDARARFLERKQQRTQDHSDTRKETG.

This sequence belongs to the DEAD box helicase family. DEAH subfamily. In terms of tissue distribution, ubiquitously expressed.

The catalysed reaction is ATP + H2O = ADP + phosphate + H(+). In terms of biological role, probable ATP-dependent RNA helicase. This is Probable ATP-dependent RNA helicase DHX40 (DHX40) from Homo sapiens (Human).